The following is an 858-amino-acid chain: Elongation factor 2b (858 aa).

Residues 17-362 (SNIRNMSVIA…MITIHLPSPV (346 aa)) form the tr-type G domain. GTP is bound by residues 26–33 (AHVDHGKS), 158–161 (NKMD), and 216–218 (SGL). His-715 carries the diphthamide modification.

It belongs to the TRAFAC class translation factor GTPase superfamily. Classic translation factor GTPase family. EF-G/EF-2 subfamily. In terms of assembly, binds to 80S ribosomes. Actively translating ribosomes show mutually exclusive binding of eIF5a (EIF5A or EIF5A2) and EEF2/eEF2. Interacts with serbp1; interaction sequesters eef2/eEF2 at the A-site of the ribosome, thereby blocking the interaction sites of the mRNA-tRNA complex, promoting ribosome stabilization and hibernation. Interacts with habp4; interaction takes place at the A-site of hibernating ribosomes and promotes ribosome stabilization.

The protein localises to the cytoplasm. It is found in the nucleus. The catalysed reaction is GTP + H2O = GDP + phosphate + H(+). In terms of biological role, catalyzes the GTP-dependent ribosomal translocation step during translation elongation. During this step, the ribosome changes from the pre-translocational (PRE) to the post-translocational (POST) state as the newly formed A-site-bound peptidyl-tRNA and P-site-bound deacylated tRNA move to the P and E sites, respectively. Catalyzes the coordinated movement of the two tRNA molecules, the mRNA and conformational changes in the ribosome. The polypeptide is Elongation factor 2b (Danio rerio (Zebrafish)).